The sequence spans 252 residues: Tricin synthase 1 (252 aa).

S-adenosyl-L-methionine-binding positions include Ser65, Glu87, 89-90 (GV), Ser95, and Asp113. Asp168 serves as a coordination point for a divalent metal cation. An S-adenosyl-L-methionine-binding site is contributed by Asp170. The a divalent metal cation site is built by Asp194 and Asn195.

Belongs to the class I-like SAM-binding methyltransferase superfamily. Cation-dependent O-methyltransferase family. CCoAMT subfamily. It depends on Mg(2+) as a cofactor. The cofactor is Mn(2+). Co(2+) is required as a cofactor. In terms of tissue distribution, ubiquitous. Highest expression in stems and roots.

Its subcellular location is the nucleus. The catalysed reaction is tricetin + 2 S-adenosyl-L-methionine = 3',5'-di-O-methyltricetin + 2 S-adenosyl-L-homocysteine + 2 H(+). In terms of biological role, catalyzes the stepwise methylation of tricetin to its 3'-mono- and 3',5'-dimethyl ethers. No 3',4',5'-trimethylated ester derivatives are produced. Can use caffeoyl-CoA, 5-hydroxyferulic acid, luteolin, tricetin, quercetin, myrcetin and 7,8-dihydroxyflavone as substrates, but not naringenin, apigenin or kaempferol. The 2,3-double bond and the O-dihydroxyl group of the substrate are both required for catalytic activity of the enzyme. This chain is Tricin synthase 1 (ROMT-15), found in Oryza sativa subsp. japonica (Rice).